A 342-amino-acid polypeptide reads, in one-letter code: N-acetyl-gamma-glutamyl-phosphate reductase (342 aa).

Residue Cys156 is part of the active site.

The protein belongs to the NAGSA dehydrogenase family. Type 1 subfamily.

The protein localises to the cytoplasm. It carries out the reaction N-acetyl-L-glutamate 5-semialdehyde + phosphate + NADP(+) = N-acetyl-L-glutamyl 5-phosphate + NADPH + H(+). Its pathway is amino-acid biosynthesis; L-arginine biosynthesis; N(2)-acetyl-L-ornithine from L-glutamate: step 3/4. Its function is as follows. Catalyzes the NADPH-dependent reduction of N-acetyl-5-glutamyl phosphate to yield N-acetyl-L-glutamate 5-semialdehyde. The protein is N-acetyl-gamma-glutamyl-phosphate reductase of Pseudoalteromonas atlantica (strain T6c / ATCC BAA-1087).